The chain runs to 329 residues: Stimulator of interferon genes protein (329 aa).

Over 1-4 (MACV) the chain is Cytoplasmic. A helical transmembrane segment spans residues 5-25 (LAIGSILFVWILGKGKYSGAQ). Residue leucine 26 is a topological domain, lumenal. A helical transmembrane segment spans residues 27-52 (IYRMATNFAISQGCCLVTCACELTEE). Residues 53 to 74 (IKHLHTRYNGHYWRALKASFNL) are Cytoplasmic-facing. A helical transmembrane segment spans residues 75–88 (SCAAFVTAILCYVF). The Lumenal segment spans residues 89–98 (YEPKLMASLP). A helical membrane pass occupies residues 99-116 (LTIDITLTLLSWLFCWIL). Topologically, residues 117–329 (GIQGPTPATI…QQHSEEYSML (213 aa)) are cytoplasmic. The interval 135–325 (LNVAHGLAWS…KHIRQQHSEE (191 aa)) is cyclic dinucleotide-binding domain (CBD). Residues serine 144, tyrosine 149, arginine 220, and threonine 245 each contribute to the 2',3'-cGAMP site. 3',3'-c-di-GMP-binding positions include serine 144, tyrosine 149, 220–223 (RVFK), and threonine 245.

The protein belongs to the STING family. As to quaternary structure, homodimer; forms a homodimer in absence of cyclic nucleotide (c-di-GMP or cGAMP). Homotetramer; in presence of cyclic nucleotide (c-di-GMP or cGAMP), forms tetramers and higher-order oligomers through side-by-side packing.

The protein resides in the endoplasmic reticulum membrane. Its subcellular location is the cytoplasm. It is found in the perinuclear region. It localises to the endoplasmic reticulum-Golgi intermediate compartment membrane. The protein localises to the golgi apparatus membrane. The protein resides in the cytoplasmic vesicle. Its subcellular location is the autophagosome membrane. It catalyses the reaction H(+)(in) = H(+)(out). Functionally, sensor of cytosolic DNA from bacteria and viruses that promotes autophagy. Acts by recognizing and binding cyclic GMP-AMP (cGAMP), a messenger produced by CGAS in response to DNA in the cytosol. Exhibits guanine base-specific ligand recognition: binds 3'-3'linked cGAMP, 2'-3' linked cGAMP and 3'-3' linked c-di-GMP with much greater affinity as compared to 3'-3' linked c-di-AMP. Following cGAMP-binding, promotes the formation of autophagosomes, leading to target cytosolic DNA for degradation by the lysosome. Promotes autophagy by acting as a proton channel that directs proton efflux from the Golgi to facilitate LC3 lipidation. Lacks the C-terminal tail (CTT) found in other vertebrate orthologs which is essential for interferon signaling. This Xenopus tropicalis (Western clawed frog) protein is Stimulator of interferon genes protein.